The chain runs to 825 residues: Arabinolytic transcriptional activator araR (825 aa).

The span at 1-17 (MASSHQGNGTVPNSQTD) shows a compositional bias: polar residues. The interval 1-28 (MASSHQGNGTVPNSQTDAPPDSSTKRRW) is disordered. Positions 35–61 (CDSCHARRVRCDRQFPCSRCLRSEITC) form a DNA-binding region, zn(2)-C6 fungal-type. A disordered region spans residues 117 to 152 (STFHHRSPPANAPTVSAPSVDGRRSQTDPQLPVRRP).

It belongs to the xlnR/xlr1 family. araR subfamily.

It is found in the nucleus. Functionally, transcriptional activator of the arabinanolytic system. Involved in the regulation of extracellular arabinanolytic genes and in the regulation of the intracellular activities of L-arabinose catabolic genes in the pentose catabolic pathway (PCP) in response to the presence of L-arabinose. This is Arabinolytic transcriptional activator araR from Emericella nidulans (strain FGSC A4 / ATCC 38163 / CBS 112.46 / NRRL 194 / M139) (Aspergillus nidulans).